A 425-amino-acid chain; its full sequence is MKLILNKEELLDKYSRRKAVEEDIEQQVRKILNEVASSGDEALIEYAREFDGFKGDLSNLKVSEEEIDKAYREVDDGFLNSLRKAIQRVFDFHQKQLPRSWFTTEENGNILGQIYTPVEVAGIYVPGGTAAYPSSVVMNAVPAKVAGVKRIVMVSPQKGERMNPYVLVAAREAGVTEIYRVGGAHAIAALAFGTKTIPRVDVITGPGNIYVTIAKKLVYGTVNIDMLAGPSEVVVIADSSAKPEYLAADMLSQAEHDSLASGVVITWDGELARKTAQKVEEYLKLLPRREIILKALENCGGIVVVDDEEEALQLANQLAPEHLELMLPNPFGYLAKVKNAGAVFLGQFSPEPMGDYLAGPNHVLPTSGTSRFYSPLSVDNFLKKSSVIYYSQEGFLADARDVIKLAETEGLFAHALSVKVRISNE.

Substrate contacts are provided by Ser231, Gln253, and His256. Zn(2+)-binding residues include Gln253 and His256. Catalysis depends on proton acceptor residues Glu321 and His322. Residues His322, Asp355, Glu409, and His414 each contribute to the substrate site. Zn(2+) is bound at residue Asp355. His414 contributes to the Zn(2+) binding site.

This sequence belongs to the histidinol dehydrogenase family. Zn(2+) serves as cofactor.

The enzyme catalyses L-histidinol + 2 NAD(+) + H2O = L-histidine + 2 NADH + 3 H(+). The protein operates within amino-acid biosynthesis; L-histidine biosynthesis; L-histidine from 5-phospho-alpha-D-ribose 1-diphosphate: step 9/9. Functionally, catalyzes the sequential NAD-dependent oxidations of L-histidinol to L-histidinaldehyde and then to L-histidine. This is Histidinol dehydrogenase from Carboxydothermus hydrogenoformans (strain ATCC BAA-161 / DSM 6008 / Z-2901).